The chain runs to 183 residues: uncharacterized protein (183 aa).

The chain crosses the membrane as a helical span at residues 153-175 (LLYVFIRLFAGCLKVFRLCILWL).

It is found in the membrane. This is an uncharacterized protein from Saccharomyces cerevisiae (strain ATCC 204508 / S288c) (Baker's yeast).